A 217-amino-acid polypeptide reads, in one-letter code: Cytokinin riboside 5'-monophosphate phosphoribohydrolase LOG7 (217 aa).

Substrate contacts are provided by residues glutamate 79, 97-98 (RK), 114-120 (GYGTLEE), and threonine 126.

Belongs to the LOG family. As to expression, expressed in roots and shoots. Detected in the epidermis of the root elongation zone, cotyledon and leaves, in trichomes and pollen.

The protein resides in the cytoplasm. It localises to the nucleus. It catalyses the reaction N(6)-(dimethylallyl)adenosine 5'-phosphate + H2O = N(6)-dimethylallyladenine + D-ribose 5-phosphate. The enzyme catalyses 9-ribosyl-trans-zeatin 5'-phosphate + H2O = trans-zeatin + D-ribose 5-phosphate. In terms of biological role, cytokinin-activating enzyme working in the direct activation pathway. Phosphoribohydrolase that converts inactive cytokinin nucleotides to the biologically active free-base forms. In Arabidopsis thaliana (Mouse-ear cress), this protein is Cytokinin riboside 5'-monophosphate phosphoribohydrolase LOG7 (LOG7).